Here is a 2150-residue protein sequence, read N- to C-terminus: Hybrid signal transduction histidine kinase A (2150 aa).

Over residues 1–10 (MELKTFKDLN) the composition is skewed to basic and acidic residues. Disordered regions lie at residues 1 to 41 (MELK…QQQQ), 68 to 149 (HIPQ…YYYS), 184 to 267 (NSSS…HQRR), 286 to 323 (KNKP…GSLG), 339 to 359 (TEES…NCGS), 415 to 505 (NNNN…NSPR), 520 to 546 (SLTS…GRNG), and 560 to 733 (KPVV…NGAT). Positions 19-32 (PVINTGDQPNPLRT) are enriched in polar residues. The span at 68 to 81 (HIPQQLYQKQQQQQ) shows a compositional bias: low complexity. Over residues 82–104 (HSHSYGNHSFIHNVSPTSPSYDI) the composition is skewed to polar residues. Composition is skewed to low complexity over residues 105 to 145 (NNNN…YNNN) and 184 to 244 (NSSS…NNNI). Residues 289–304 (PLSSSTPSTVNTCGAV) are compositionally biased toward polar residues. Low complexity-rich tracts occupy residues 305–318 (NNNS…NNNS), 344–359 (GGNN…NCGS), and 415–447 (NNNN…HNIS). A compositionally biased stretch (polar residues) spans 448–468 (PRGSNISPRSNNGGSTTISPR). Composition is skewed to low complexity over residues 469–485 (NISN…NNNI), 520–545 (SLTS…NGRN), and 565–600 (NNGN…INNN). Positions 614-628 (SKTNSLQDFETSSMN) are enriched in polar residues. The segment covering 657–727 (NSNNTNSNNS…NNNNNNNNNN (71 aa)) has biased composition (low complexity). Residues 772 to 792 (AIILGLFIVGSSISILATLVL) form a helical membrane-spanning segment. The CHASE domain maps to 838–1082 (STSEDQFVPF…NVGGRNWMIA (245 aa)). Residues 1098 to 1118 (PYAIGGVCMLLSALVSFWFAV) form a helical membrane-spanning segment. Positions 1139–1164 (NRKLAEKALAESQERLELAMEGSEDA) form a coiled coil. Disordered regions lie at residues 1209–1228 (LNFK…FNLF) and 1233–1252 (VDSS…GGGG). The PAS domain occupies 1235 to 1317 (SSSPQSITNV…SEIKKTITRE (83 aa)). A PAC domain is found at 1321-1376 (MEIECRMRKKYGGYLYIIMRGKVVSNETSFKDNSLRMAGTLRDMTSRKDMQRLILE). One can recognise a Histidine kinase domain in the interval 1393–1620 (TVSHEVRTPL…KFKCIIPFLL (228 aa)). A Phosphohistidine; by autocatalysis modification is found at His-1396. Disordered stretches follow at residues 1874–1893 (GGGS…NNNF), 1933–1952 (HGNQ…NNSS), and 1962–2017 (QNNN…DTPV). 3 stretches are compositionally biased toward low complexity: residues 1878 to 1893 (NTMN…NNNF), 1935 to 1952 (NQQQ…NNSS), and 1962 to 2002 (QNNN…TPTL). The region spanning 2026–2146 (KALIVEDNEL…TLKDALAKWG (121 aa)) is the Response regulatory domain. Asp-2076 carries the 4-aspartylphosphate modification.

Interacts with SDF-2, an acbA peptide involved in sporulation.

The protein localises to the cell membrane. It catalyses the reaction ATP + protein L-histidine = ADP + protein N-phospho-L-histidine.. Functionally, acts as a receptor histidine kinase for the cytokinin SDF-2 in a signal transduction pathway that regulates prestalk gene expression and controls terminal differentiation of prespore cells. Binding of SDF-2 to this protein inhibits phosphorelay and induces rapid sporulation. This protein undergoes an ATP-dependent autophosphorylation at a conserved histidine residue in the kinase core, and a phosphoryl group is then transferred to a conserved aspartate residue in the receiver domain. The polypeptide is Hybrid signal transduction histidine kinase A (dhkA) (Dictyostelium discoideum (Social amoeba)).